The primary structure comprises 290 residues: Non-homologous end joining protein Ku (290 aa).

The 173-residue stretch at 11–183 (TFGLISMPVR…EAPKITSEVK (173 aa)) folds into the Ku domain. The segment at 253–290 (MKDQKKGSRLAEVDKESTVQMTPKKPAVKERRGRKRVA) is disordered. Positions 254-269 (KDQKKGSRLAEVDKES) are enriched in basic and acidic residues.

Belongs to the prokaryotic Ku family. In terms of assembly, homodimer. Interacts with LigD.

Functionally, with LigD forms a non-homologous end joining (NHEJ) DNA repair enzyme, which repairs dsDNA breaks with reduced fidelity. Binds linear dsDNA with 5'- and 3'- overhangs but not closed circular dsDNA nor ssDNA. Recruits and stimulates the ligase activity of LigD. This Koribacter versatilis (strain Ellin345) protein is Non-homologous end joining protein Ku.